Consider the following 76-residue polypeptide: uncharacterized protein (76 aa).

Its subcellular location is the host cytoplasm. This is an uncharacterized protein from Escherichia phage Mu (Bacteriophage Mu).